Here is a 156-residue protein sequence, read N- to C-terminus: EPIDERMAL PATTERNING FACTOR-like protein 6 (156 aa).

The signal sequence occupies residues 1–47 (MGFERTSSSLSLLSSSLPSSLQPSENTRAKFSLFYLLLLFFVLCVIA). Cystine bridges form between C113/C147, C117/C123, and C120/C149.

This sequence belongs to the plant cysteine rich small secretory peptide family. Epidermal patterning factor subfamily. As to quaternary structure, interacts with ERECTA. In terms of tissue distribution, expressed in the internal layers of the root, hypocotyl and stems, and in the midrib of developing rosette leaves. Detected in a ring of cells surrounding the vascular elements. Expressed in developing stems soon after bolting, in inflorescence stems, near the root apex and in the chalazal region of ovules. Not found in cotyledons or in stomatal precursors or stomata.

The protein localises to the secreted. In terms of biological role, acts primarily as positive regulator of inflorescence growth. Endodermal expression is sufficient for proper inflorescence architecture. Redundantly involved with EPFL4 in procambial development regulation. Also acts as tissue-specific regulator of epidermal pattern. Controls stomatal patterning by repressing stomatal production. TMM (AC Q9SSD1) functions to dampen or block CHAL signaling. Not processed by SDD1 (AC O64495). Acts as growth-regulatory ligand for ERECTA family receptors. The polypeptide is EPIDERMAL PATTERNING FACTOR-like protein 6 (Arabidopsis thaliana (Mouse-ear cress)).